A 399-amino-acid polypeptide reads, in one-letter code: Tryptophan synthase beta chain (399 aa).

Lys92 is subject to N6-(pyridoxal phosphate)lysine.

Belongs to the TrpB family. As to quaternary structure, tetramer of two alpha and two beta chains. Requires pyridoxal 5'-phosphate as cofactor.

The catalysed reaction is (1S,2R)-1-C-(indol-3-yl)glycerol 3-phosphate + L-serine = D-glyceraldehyde 3-phosphate + L-tryptophan + H2O. It participates in amino-acid biosynthesis; L-tryptophan biosynthesis; L-tryptophan from chorismate: step 5/5. Functionally, the beta subunit is responsible for the synthesis of L-tryptophan from indole and L-serine. The protein is Tryptophan synthase beta chain of Acidithiobacillus ferrooxidans (strain ATCC 23270 / DSM 14882 / CIP 104768 / NCIMB 8455) (Ferrobacillus ferrooxidans (strain ATCC 23270)).